Reading from the N-terminus, the 106-residue chain is Large ribosomal subunit protein bL21 (106 aa).

The protein belongs to the bacterial ribosomal protein bL21 family. In terms of assembly, part of the 50S ribosomal subunit. Contacts protein L20.

Its function is as follows. This protein binds to 23S rRNA in the presence of protein L20. The protein is Large ribosomal subunit protein bL21 of Chlamydia felis (strain Fe/C-56) (Chlamydophila felis).